We begin with the raw amino-acid sequence, 200 residues long: Probable molybdenum cofactor guanylyltransferase (200 aa).

Residues 9-11 (LAG), K21, D69, and D100 each bind GTP. Residue D100 coordinates Mg(2+).

Belongs to the MobA family. It depends on Mg(2+) as a cofactor.

It is found in the cytoplasm. The enzyme catalyses Mo-molybdopterin + GTP + H(+) = Mo-molybdopterin guanine dinucleotide + diphosphate. Functionally, transfers a GMP moiety from GTP to Mo-molybdopterin (Mo-MPT) cofactor (Moco or molybdenum cofactor) to form Mo-molybdopterin guanine dinucleotide (Mo-MGD) cofactor. The polypeptide is Probable molybdenum cofactor guanylyltransferase (Bacillus cereus (strain ZK / E33L)).